The sequence spans 70 residues: Large ribosomal subunit protein bL28c (70 aa).

The protein belongs to the bacterial ribosomal protein bL28 family.

The protein resides in the plastid. The protein localises to the cyanelle. The chain is Large ribosomal subunit protein bL28c (rpl28) from Cyanophora paradoxa.